Reading from the N-terminus, the 481-residue chain is MEKRTSCSVQTSTNCDNSLEILNSAHQATGAVQMRIKNANSHQDRQSQTKSMILTDAGKVTEPISRHRRNHSQHVLKDVIPPLEHPMVEKEGYLQKAKIADGGKKLRKNWSTSWIVLSGRKIEFYKDSKQQALPNMKTRHNVESVDLCGAHIEWAKEKSSRKSVFQITTVSGNEFLLQSDIDFLILDWFQAIKNAIDRLPKNPSCGSLELFNLQRSSSSELPSHCHIDRKEQKPEHRKSFMFRLHHSASDTSDKNRVKSRLKKFISRRPSLKTLQEKGLIKDQIFGSHLHTVCEREHSTVPWFVKQCIEAVEKRGLDVDGIYRVSGNLATIQKLRFIVNQEEKLNLDDSQWEDIHVVTGALKMFFRELSEPLFPYSFFERFVEAIKKQDSNEKIETMRSLVKRLPPPNHDTMKILFRHLTKIVAKASQNLMSTQSLGIVFGPTLLRAENESGNVAVHMVYQNQIAEFMLTEYDKIFSSEED.

A phosphoserine mark is found at serine 51, serine 111, serine 204, serine 207, and serine 249. The region spanning 87–197 (MVEKEGYLQK…WFQAIKNAID (111 aa)) is the PH domain. The Rho-GAP domain maps to 287–476 (SHLHTVCERE…FMLTEYDKIF (190 aa)).

The protein resides in the cytoplasm. Its subcellular location is the membrane. GTPase activator for the Rho-type GTPases by converting them to an inactive GDP-bound state. Has activity toward RAC1. Overexpression results in an increase in actin stress fibers and cell contraction. The protein is Rho GTPase-activating protein 15 (Arhgap15) of Mus musculus (Mouse).